The chain runs to 229 residues: Ribonuclease 3 (229 aa).

Positions 5-127 (LDRLERKLGY…LIGAIYLDTG (123 aa)) constitute an RNase III domain. E40 contacts Mg(2+). Residue D44 is part of the active site. 2 residues coordinate Mg(2+): D113 and E116. E116 is an active-site residue. Positions 154–224 (DPKTRLQEFL…AAAALVALGV (71 aa)) constitute a DRBM domain.

It belongs to the ribonuclease III family. As to quaternary structure, homodimer. Mg(2+) is required as a cofactor.

It is found in the cytoplasm. It carries out the reaction Endonucleolytic cleavage to 5'-phosphomonoester.. Its function is as follows. Digests double-stranded RNA. Involved in the processing of primary rRNA transcript to yield the immediate precursors to the large and small rRNAs (23S and 16S). Processes some mRNAs, and tRNAs when they are encoded in the rRNA operon. Processes pre-crRNA and tracrRNA of type II CRISPR loci if present in the organism. The sequence is that of Ribonuclease 3 from Pseudomonas aeruginosa (strain LESB58).